We begin with the raw amino-acid sequence, 338 residues long: Heat-inducible transcription repressor HrcA (338 aa).

Belongs to the HrcA family.

Functionally, negative regulator of class I heat shock genes (grpE-dnaK-dnaJ and groELS operons). Prevents heat-shock induction of these operons. This chain is Heat-inducible transcription repressor HrcA, found in Bacillus cereus (strain 03BB102).